We begin with the raw amino-acid sequence, 613 residues long: Ribosome-associated molecular chaperone SSB2 (613 aa).

N-acetylalanine is present on Ala-2. The interval 2–391 is nucleotide binding domain (NBD); that stretch reads AEGVFQGAIG…ILTGQSTSDE (390 aa). 16–18 lines the ATP pocket; the sequence is TTY. The residue at position 47 (Thr-47) is a Phosphothreonine. ATP-binding positions include Lys-73, 205–207, 271–278, and Gly-342; these read GGT and ERAKRTLS. An inter-domain linker region spans residues 392–402; the sequence is TKDLLLLDVAP. Residues 403 to 613 are substrate binding domain (SBD); the sequence is LSLGVGMQGD…RVVTKAMSSR (211 aa). The Contributes to ribosome binding signature appears at 428 to 430; that stretch reads KRR. At Thr-431 the chain carries Phosphothreonine. A lid domain (SBDalpha) region spans residues 516–612; the sequence is SEEIEKMVNQ…KRVVTKAMSS (97 aa). The short motif at 574–582 is the Nuclear export signal element; that stretch reads IEAALSDAL. Residues 601–613 are required for interaction with ribosomes; the sequence is GLKRVVTKAMSSR.

This sequence belongs to the heat shock protein 70 family. Ssb-type Hsp70 subfamily. Binds to ribosomes. Binds close to the ribosomal tunnel exit via contacts with both ribosomal proteins RPL35, RPL39 and RPL19, and rRNA. Directly interacts with nascent polypeptides. This interaction is dependent on the ribosome-associated complex (RAC). Interacts with SSE1.

The protein localises to the cytoplasm. The catalysed reaction is ATP + H2O = ADP + phosphate + H(+). In terms of biological role, ribosome-bound, Hsp70-type chaperone that assists in the cotranslational folding of newly synthesized proteins in the cytosol. Stimulates folding by interacting with nascent chains, binding to short, largely hydrophobic sequences exposed by unfolded proteins, thereby stabilizing longer, more slowly translated, and aggregation-prone nascent polypeptides and domains that cannot fold stably until fully synthesized. The Hsp70-protein substrate interaction depends on ATP-binding and on allosteric regulation between the NBD and the SBD. The ATP-bound state is characterized by a fast exchange rate of substrate (low affinity state), while in the ADP-bound state exchange is much slower (high affinity state). During the Hsp70 cycle, the chaperone switches between the ATP-bound state (open conformation) and the ADP-bound state (closed conformation) by major conformational rearrangements involving mainly the lid domain. Ssb cooperates with a specific Hsp40/Hsp70 co-chaperone termed the ribosome-associated complex (RAC), which stimulates the ATPase activity of the ribosome-associated pool of Ssbs and switches it to the high affinity substrate binding state. Hsp110 chaperone SSE1 and FES1 act as nucleotide exchange factors that cause substrate release. In Saccharomyces cerevisiae (strain ATCC 204508 / S288c) (Baker's yeast), this protein is Ribosome-associated molecular chaperone SSB2.